Reading from the N-terminus, the 336-residue chain is Holliday junction branch migration complex subunit RuvB (336 aa).

Positions 4 to 184 (SDRLISSQSI…FGIVQRLEYY (181 aa)) are large ATPase domain (RuvB-L). ATP contacts are provided by residues Ile-23, Arg-24, Gly-65, Lys-68, Thr-69, Thr-70, 131 to 133 (EDY), Arg-174, Tyr-184, and Arg-221. Thr-69 provides a ligand contact to Mg(2+). The segment at 185-255 (SVDSLTKIVA…MAQQALEMLE (71 aa)) is small ATPAse domain (RuvB-S). The segment at 258 to 336 (QHGFDLMDRK…HFGFSAIEQE (79 aa)) is head domain (RuvB-H). The DNA site is built by Arg-313 and Arg-318.

This sequence belongs to the RuvB family. Homohexamer. Forms an RuvA(8)-RuvB(12)-Holliday junction (HJ) complex. HJ DNA is sandwiched between 2 RuvA tetramers; dsDNA enters through RuvA and exits via RuvB. An RuvB hexamer assembles on each DNA strand where it exits the tetramer. Each RuvB hexamer is contacted by two RuvA subunits (via domain III) on 2 adjacent RuvB subunits; this complex drives branch migration. In the full resolvosome a probable DNA-RuvA(4)-RuvB(12)-RuvC(2) complex forms which resolves the HJ.

It is found in the cytoplasm. It carries out the reaction ATP + H2O = ADP + phosphate + H(+). Its function is as follows. The RuvA-RuvB-RuvC complex processes Holliday junction (HJ) DNA during genetic recombination and DNA repair, while the RuvA-RuvB complex plays an important role in the rescue of blocked DNA replication forks via replication fork reversal (RFR). RuvA specifically binds to HJ cruciform DNA, conferring on it an open structure. The RuvB hexamer acts as an ATP-dependent pump, pulling dsDNA into and through the RuvAB complex. RuvB forms 2 homohexamers on either side of HJ DNA bound by 1 or 2 RuvA tetramers; 4 subunits per hexamer contact DNA at a time. Coordinated motions by a converter formed by DNA-disengaged RuvB subunits stimulates ATP hydrolysis and nucleotide exchange. Immobilization of the converter enables RuvB to convert the ATP-contained energy into a lever motion, pulling 2 nucleotides of DNA out of the RuvA tetramer per ATP hydrolyzed, thus driving DNA branch migration. The RuvB motors rotate together with the DNA substrate, which together with the progressing nucleotide cycle form the mechanistic basis for DNA recombination by continuous HJ branch migration. Branch migration allows RuvC to scan DNA until it finds its consensus sequence, where it cleaves and resolves cruciform DNA. This Legionella pneumophila (strain Paris) protein is Holliday junction branch migration complex subunit RuvB.